A 428-amino-acid chain; its full sequence is UPF0229 protein YeaH (428 aa).

Positions 78-90 (GNDHFIQNDRIER) are enriched in basic and acidic residues. Residues 78–111 (GNDHFIQNDRIERPQGGGGGGSGSGQGQASQDGE) form a disordered region. The span at 92 to 103 (QGGGGGGSGSGQ) shows a compositional bias: gly residues.

Belongs to the UPF0229 family.

In Salmonella paratyphi C (strain RKS4594), this protein is UPF0229 protein YeaH.